Consider the following 301-residue polypeptide: 2-oxo-3-(phosphooxy)propyl 3-oxoalkanoate synthase (301 aa).

It belongs to the AfsA family.

The catalysed reaction is a medium-chain 3-oxoacyl-[ACP] + dihydroxyacetone phosphate = a (4-alkanoyl-5-oxo-2,5-dihydrofuran-3-yl)methyl phosphate + holo-[ACP] + H2O. Its function is as follows. Involved in the biosynthesis of A factor (2-isocapryloyl-3R-hydroxymethyl-gamma-butyrolactone), a gamma-butyrolactone autoregulator that triggers secondary metabolism and morphogenesis in Streptomyces. Catalyzes beta-ketoacyl transfer from 8-methyl-3-oxononanoyl-acyl carrier protein (ACP) to the hydroxyl group of dihydroxyacetone phosphate (DHAP), thus producing an 8-methyl-3-oxononanoyl-DHAP ester. This is 2-oxo-3-(phosphooxy)propyl 3-oxoalkanoate synthase from Streptomyces griseus.